A 252-amino-acid chain; its full sequence is MYVVVLSLGDPVSRTFLELVPEMPLVETRGEIEVRKFGEWPAVVHKGEPTDFNREDLLLSLGKYAIFISRHEMANPRPMFTVHTPGSWPDVSVANPPLATAIFRALCRHAEEPFKCAFEATHHPPNTSAASATFVEVGSTEAEWRDRRAVGVLVQALEEVLGRELGAGATTMVVGDLHYSTVADSALNGEVELGHILPKYLETTLQHVKTAFYKHTTPVRRVVVFRKNVKNPARAEVVEFLREREVEVVLKG.

Belongs to the DtdA deacylase family. Monomer. The cofactor is Zn(2+).

The catalysed reaction is a D-aminoacyl-tRNA + H2O = a tRNA + a D-alpha-amino acid + H(+). It catalyses the reaction glycyl-tRNA(Ala) + H2O = tRNA(Ala) + glycine + H(+). In terms of biological role, D-aminoacyl-tRNA deacylase with broad substrate specificity. By recycling D-aminoacyl-tRNA to D-amino acids and free tRNA molecules, this enzyme counteracts the toxicity associated with the formation of D-aminoacyl-tRNA entities in vivo. In Pyrobaculum neutrophilum (strain DSM 2338 / JCM 9278 / NBRC 100436 / V24Sta) (Thermoproteus neutrophilus), this protein is D-aminoacyl-tRNA deacylase.